The sequence spans 399 residues: MQPMTARFDLFVVGSGFFGLTIAERVATQLDKRVLVLERRPHIGGNAYSEAEPQTGIEVHKYGAHLFHTSNKRVWDYVRQFTDFTDYRHRVFAMHNGQAYQFPMGLGLVSQFFGKYFTPEQARQLIAEQAAEIDTADAQNLEEKAISLIGRPLYEAFVKGYTAKQWQTDPKELPAANITRLPVRYTFDNRYFSDTYEGLPTDGYTAWLQNMAADHRIEVRLNTDWFDVRGQLRPGSPAAPVVYTGPLDRYFDYAEGRLGWRTLDFEVEVLPIGDFQGTAVMNYNDLDVPYTRIHEFRHFHPERDYPTDKTVIMREYSRFAEDDDEPYYPINTEADRALLATYRARAKSETASSKVLFGGRLGTYQYLDMHMAIASALNMYDNVLAPHLRDGVPLLQDGA.

Residues Phe-18, Glu-38, Asn-46, and Leu-66 each contribute to the FAD site. Residues Phe-157, Thr-162, Trp-166, and Tyr-191 each coordinate UDP-alpha-D-galactose. 224–225 (DW) lines the FAD pocket. UDP-alpha-D-galactose-binding residues include Asn-282, Arg-292, and Tyr-328. FAD is bound at residue Arg-360. Residue Tyr-366 participates in UDP-alpha-D-galactose binding. 367-369 (LDM) is a binding site for FAD.

It belongs to the UDP-galactopyranose/dTDP-fucopyranose mutase family. Homotetramer. The cofactor is FAD.

It carries out the reaction UDP-alpha-D-galactose = UDP-alpha-D-galactofuranose. It participates in cell wall biogenesis; cell wall polysaccharide biosynthesis. Its function is as follows. Catalyzes the interconversion through a 2-keto intermediate of uridine diphosphogalactopyranose (UDP-GalP) into uridine diphosphogalactofuranose (UDP-GalF) which is a key building block for cell wall construction in Mycobacterium tuberculosis. The protein is UDP-galactopyranose mutase (glf) of Mycobacterium tuberculosis (strain CDC 1551 / Oshkosh).